A 65-amino-acid polypeptide reads, in one-letter code: MPKMKTKKSAAKRFKVRAGGSIKRSQAFKRHILTKKTTKNKRQLRGVAAVHASDMVSVRVMLPYA.

This sequence belongs to the bacterial ribosomal protein bL35 family.

The polypeptide is Large ribosomal subunit protein bL35 (Nitrosomonas europaea (strain ATCC 19718 / CIP 103999 / KCTC 2705 / NBRC 14298)).